Consider the following 286-residue polypeptide: 33 kDa chaperonin (286 aa).

2 disulfide bridges follow: cysteine 225/cysteine 227 and cysteine 258/cysteine 261.

This sequence belongs to the HSP33 family. Post-translationally, under oxidizing conditions two disulfide bonds are formed involving the reactive cysteines. Under reducing conditions zinc is bound to the reactive cysteines and the protein is inactive.

The protein localises to the cytoplasm. Redox regulated molecular chaperone. Protects both thermally unfolding and oxidatively damaged proteins from irreversible aggregation. Plays an important role in the bacterial defense system toward oxidative stress. This chain is 33 kDa chaperonin, found in Shewanella sediminis (strain HAW-EB3).